Reading from the N-terminus, the 230-residue chain is PsbP-like protein 1, chloroplastic (230 aa).

Belongs to the PsbP family.

Its subcellular location is the plastid. It localises to the chloroplast thylakoid lumen. Required for efficient repair of photodamaged PSII, but not tightly associated with the complex. This Arabidopsis thaliana (Mouse-ear cress) protein is PsbP-like protein 1, chloroplastic (PPL1).